Consider the following 426-residue polypeptide: Glutamate-1-semialdehyde 2,1-aminomutase (426 aa).

K263 carries the N6-(pyridoxal phosphate)lysine modification.

Belongs to the class-III pyridoxal-phosphate-dependent aminotransferase family. HemL subfamily. In terms of assembly, homodimer. It depends on pyridoxal 5'-phosphate as a cofactor.

The protein localises to the cytoplasm. It carries out the reaction (S)-4-amino-5-oxopentanoate = 5-aminolevulinate. It functions in the pathway porphyrin-containing compound metabolism; protoporphyrin-IX biosynthesis; 5-aminolevulinate from L-glutamyl-tRNA(Glu): step 2/2. This is Glutamate-1-semialdehyde 2,1-aminomutase from Dichelobacter nodosus (strain VCS1703A).